The chain runs to 392 residues: Phosphoprotein (392 aa).

Disordered regions lie at residues 61–107 (ESTN…GLDS) and 152–182 (PIAT…DGWE). A multimerization region spans residues 217–280 (LNVNEILNTV…ITTVKIMDPG (64 aa)). Residues 219 to 246 (VNEILNTVRNLDSRMNQLETKVDRILSS) adopt a coiled-coil conformation.

The protein belongs to the rubulavirus/avulavirus P protein family. In terms of assembly, homotetramer. Interacts (via multimerization domain) with polymerase L; this interaction forms the polymerase L-P complex. Interacts (via N-terminus) with N0 (via Ncore); this interaction allows P to chaperon N0 to avoid N polymerization before encapsidation. Interacts (via C-terminus) with N-RNA template; this interaction positions the polymerase on the template for both transcription and replication.

Functionally, essential cofactor of the RNA polymerase L that plays a central role in the transcription and replication by forming the polymerase complex with RNA polymerase L and recruiting L to the genomic N-RNA template for RNA synthesis. Also plays a central role in the encapsidation of nascent RNA chains by forming the encapsidation complex with the nucleocapsid protein N (N-P complex). Acts as a chaperone for newly synthesized free N protein, so-called N0, allowing encapsidation of nascent RNA chains during replication. The nucleoprotein protein N prevents excessive phosphorylation of P, which leads to down-regulation of viral transcription/ replication. Participates, together with N, in the formation of viral factories (viroplasms), which are large inclusions in the host cytoplasm where replication takes place. This chain is Phosphoprotein (P/V), found in Canis lupus familiaris (Dog).